A 184-amino-acid polypeptide reads, in one-letter code: ATP synthase subunit b, chloroplastic (184 aa).

Residues Leu27–Leu49 traverse the membrane as a helical segment.

The protein belongs to the ATPase B chain family. As to quaternary structure, F-type ATPases have 2 components, F(1) - the catalytic core - and F(0) - the membrane proton channel. F(1) has five subunits: alpha(3), beta(3), gamma(1), delta(1), epsilon(1). F(0) has four main subunits: a(1), b(1), b'(1) and c(10-14). The alpha and beta chains form an alternating ring which encloses part of the gamma chain. F(1) is attached to F(0) by a central stalk formed by the gamma and epsilon chains, while a peripheral stalk is formed by the delta, b and b' chains.

It is found in the plastid. The protein localises to the chloroplast thylakoid membrane. F(1)F(0) ATP synthase produces ATP from ADP in the presence of a proton or sodium gradient. F-type ATPases consist of two structural domains, F(1) containing the extramembraneous catalytic core and F(0) containing the membrane proton channel, linked together by a central stalk and a peripheral stalk. During catalysis, ATP synthesis in the catalytic domain of F(1) is coupled via a rotary mechanism of the central stalk subunits to proton translocation. Its function is as follows. Component of the F(0) channel, it forms part of the peripheral stalk, linking F(1) to F(0). This chain is ATP synthase subunit b, chloroplastic, found in Phaseolus vulgaris (Kidney bean).